The sequence spans 826 residues: Arsenite oxidase subunit AioA (826 aa).

[3Fe-4S] cluster contacts are provided by Cys22, Cys25, and Cys29. Residues His196, Glu204, Arg420, and His424 each coordinate substrate.

It belongs to the prokaryotic molybdopterin-containing oxidoreductase family. Heterodimer consisting of a large and a small subunit. It depends on [3Fe-4S] cluster as a cofactor. The cofactor is Mo-bis(molybdopterin guanine dinucleotide).

It carries out the reaction 2 oxidized [azurin] + arsenite + H2O = 2 reduced [azurin] + arsenate + 3 H(+). In terms of biological role, involved in the detoxification of arsenic. Oxidizes As(III)O3(3-) (arsenite) to the somewhat less toxic As(V)O4(3-) (arsenate). This chain is Arsenite oxidase subunit AioA (aioA), found in Alcaligenes faecalis.